Consider the following 129-residue polypeptide: NADPH-dependent 7-cyano-7-deazaguanine reductase (129 aa).

Cys34 functions as the Thioimide intermediate in the catalytic mechanism. Asp41 functions as the Proton donor in the catalytic mechanism. Residues Val56–Leu58 and His75–Glu76 each bind substrate.

Belongs to the GTP cyclohydrolase I family. QueF type 1 subfamily.

Its subcellular location is the cytoplasm. It catalyses the reaction 7-aminomethyl-7-carbaguanine + 2 NADP(+) = 7-cyano-7-deazaguanine + 2 NADPH + 3 H(+). The protein operates within tRNA modification; tRNA-queuosine biosynthesis. Catalyzes the NADPH-dependent reduction of 7-cyano-7-deazaguanine (preQ0) to 7-aminomethyl-7-deazaguanine (preQ1). The sequence is that of NADPH-dependent 7-cyano-7-deazaguanine reductase from Thioalkalivibrio sulfidiphilus (strain HL-EbGR7).